Consider the following 188-residue polypeptide: Ribosome-recycling factor (188 aa).

Belongs to the RRF family.

Its subcellular location is the cytoplasm. In terms of biological role, responsible for the release of ribosomes from messenger RNA at the termination of protein biosynthesis. May increase the efficiency of translation by recycling ribosomes from one round of translation to another. In Anaeromyxobacter dehalogenans (strain 2CP-C), this protein is Ribosome-recycling factor.